Reading from the N-terminus, the 215-residue chain is Thiamine import ATP-binding protein ThiQ (215 aa).

Residues 2 to 215 (IYLNNVILND…GQISQLQKGV (214 aa)) enclose the ABC transporter domain. 32-39 (GESGAGKS) serves as a coordination point for ATP.

It belongs to the ABC transporter superfamily. Thiamine importer (TC 3.A.1.19.1) family. As to quaternary structure, the complex is composed of two ATP-binding proteins (ThiQ), two transmembrane proteins (ThiP) and a solute-binding protein (ThiB).

It is found in the cell inner membrane. It catalyses the reaction thiamine(out) + ATP + H2O = thiamine(in) + ADP + phosphate + H(+). Part of the ABC transporter complex ThiBPQ involved in thiamine import. Responsible for energy coupling to the transport system. This chain is Thiamine import ATP-binding protein ThiQ, found in Haemophilus influenzae (strain ATCC 51907 / DSM 11121 / KW20 / Rd).